The sequence spans 541 residues: Carotenoid 9,10(9',10')-cleavage dioxygenase 1 (541 aa).

Residues H222, H270, H336, and H526 each coordinate Fe cation.

It belongs to the carotenoid oxygenase family. It depends on Fe(2+) as a cofactor.

It catalyses the reaction all-trans-zeaxanthin + 2 O2 = 4,9-dimethyldodeca-2,4,6,8,10-pentaenedial + 2 (3R)-hydroxy-beta-ionone. Its function is as follows. Cleaves a variety of carotenoids at the 9-10 and 9'-10' double bonds. Probably not involved in abscisic acid biosynthesis. This is Carotenoid 9,10(9',10')-cleavage dioxygenase 1 (CCD1) from Pisum sativum (Garden pea).